The following is a 988-amino-acid chain: Transcription regulator srbA precursor (988 aa).

Residues 1-427 (MSTPGIGGDF…SSWHARAISH (427 aa)) are Cytoplasmic-facing. Disordered stretches follow at residues 53-85 (AFPE…SDAM) and 108-169 (GDLN…KKRA). Positions 125 to 136 (SLSVHSNSPLSS) are enriched in low complexity. Residues 165-178 (SKKRAHNVIEKRYR) form a basic motif region. The bHLH domain maps to 165–236 (SKKRAHNVIE…SKATEYIRHL (72 aa)). Positions 179–236 (ANLNEKIAELRDSVPSLRASYKQANGNSGDDDDDGVTSASKLNKASILSKATEYIRHL) are helix-loop-helix motif. Positions 226 to 260 (LSKATEYIRHLEIRNKRLEEENTALKIRLRQLDKA) form a coiled coil. Residues 267–291 (SAASVSSPSDCTVSTESGASSSPSV) are compositionally biased toward polar residues. Positions 267–313 (SAASVSSPSDCTVSTESGASSSPSVFSHAEDVPSDHSPTSSHPPEGL) are disordered. A compositionally biased stretch (low complexity) spans 301–310 (DHSPTSSHPP). Residues 428-447 (FLMLAILVVGSAFIVFVYLF) form a helical membrane-spanning segment. Topologically, residues 448–988 (NSDPRRQYSA…SDNLLLSDES (541 aa)) are lumenal. A compositionally biased stretch (low complexity) spans 866–881 (PPSPMSKASDMLSSSS). A disordered region spans residues 866–900 (PPSPMSKASDMLSSSSDDGEDGASQRNNNIIPHPM).

In terms of processing, in low oxygen or sterol conditions, undergoes proteolytic cleavage by rhomboid-type protease rbdB and is released as soluble transcription factor from the membrane.

The protein resides in the endoplasmic reticulum membrane. The protein localises to the nucleus. In terms of biological role, precursor of the transcription factor srbA, which is embedded in the endoplasmic reticulum membrane. Low oxygen or sterol conditions promote processing of this form, releasing the transcription factor form that translocates into the nucleus and activates transcription of genes required for adaptation to anaerobic growth. Transcription factor that regulates sterol biosynthesis and hyphal morphology. Plays a critical role in ergosterol biosynthesis, resistance to the azole class of antifungal drugs, and in maintenance of cell polarity. Directly binds erg11A/cyp51A upstream DNA sequence at tandem repeats, called TR34 and TR46, that produce duplicated binding sites. Also mediates regulation of iron acquisition in response to hypoxia and low iron conditions via activation of extra- and intracellular siderophore production. Positively regulates the expression of the other hypoxia adaptation key transcription factor srbB. Required for the azole-sensing and response to azole stress. Binds the high-affinity sites 5'-A-T-C-G/A-T/G-A/G-C/T-G/C-A-T-3' of target promoters. Required for virulence in murine models of invasive pulmonary aspergillosis (IPA). This is Transcription regulator srbA precursor from Aspergillus fumigatus (strain ATCC MYA-4609 / CBS 101355 / FGSC A1100 / Af293) (Neosartorya fumigata).